Here is a 299-residue protein sequence, read N- to C-terminus: ATP synthase gamma chain (299 aa).

The protein belongs to the ATPase gamma chain family. As to quaternary structure, F-type ATPases have 2 components, CF(1) - the catalytic core - and CF(0) - the membrane proton channel. CF(1) has five subunits: alpha(3), beta(3), gamma(1), delta(1), epsilon(1). CF(0) has three main subunits: a, b and c.

The protein localises to the cell membrane. Produces ATP from ADP in the presence of a proton gradient across the membrane. The gamma chain is believed to be important in regulating ATPase activity and the flow of protons through the CF(0) complex. This Clavibacter michiganensis subsp. michiganensis (strain NCPPB 382) protein is ATP synthase gamma chain.